We begin with the raw amino-acid sequence, 606 residues long: Proline--tRNA ligase (606 aa).

This sequence belongs to the class-II aminoacyl-tRNA synthetase family. ProS type 1 subfamily. In terms of assembly, homodimer.

It is found in the cytoplasm. It catalyses the reaction tRNA(Pro) + L-proline + ATP = L-prolyl-tRNA(Pro) + AMP + diphosphate. Catalyzes the attachment of proline to tRNA(Pro) in a two-step reaction: proline is first activated by ATP to form Pro-AMP and then transferred to the acceptor end of tRNA(Pro). As ProRS can inadvertently accommodate and process non-cognate amino acids such as alanine and cysteine, to avoid such errors it has two additional distinct editing activities against alanine. One activity is designated as 'pretransfer' editing and involves the tRNA(Pro)-independent hydrolysis of activated Ala-AMP. The other activity is designated 'posttransfer' editing and involves deacylation of mischarged Ala-tRNA(Pro). The misacylated Cys-tRNA(Pro) is not edited by ProRS. The sequence is that of Proline--tRNA ligase from Kocuria rhizophila (strain ATCC 9341 / DSM 348 / NBRC 103217 / DC2201).